Here is a 296-residue protein sequence, read N- to C-terminus: Probable AP endonuclease (296 aa).

C16 and C20 are oxidised to a cystine. The Zn(2+) site is built by H78, H115, E142, H182, H218, D231, H233, and E271.

It belongs to the AP endonuclease 2 family. The cofactor is Zn(2+).

It localises to the host nucleus. The protein localises to the host cytoplasm. Its subcellular location is the virion. Endonuclease of the viral base excision repair system that catalyzes DNA cleavage reaction at the apurinic or apyrimidinic sites (AP sites). Cleaves phosphodiester bonds on the 5' side of AP sites. In addition to endonuclease activity, the AP endonuclease has a proofreading 3'-5' exonuclease activity that is considerably more efficient in the elimination of a mismatch than in that of a correctly paired base. Displays 3'-phosphatase and 3'-repair diesterase activities. The single nucleotide gaps generated by the AP endonuclease are filled by the viral repair DNA polymerase X and the DNA ligase. This is Probable AP endonuclease from Ornithodoros (relapsing fever ticks).